Consider the following 374-residue polypeptide: Serpin B8 (374 aa).

It belongs to the serpin family. Ov-serpin subfamily.

The protein resides in the cytoplasm. Has an important role in epithelial desmosome-mediated cell-cell adhesion. In Bos taurus (Bovine), this protein is Serpin B8 (SERPINB8).